Here is a 472-residue protein sequence, read N- to C-terminus: Sporozoite surface protein P36p (472 aa).

Positions 1–23 are cleaved as a signal peptide; sequence MMKRRRIFMYYCFCFLLKYVAFS. N-linked (GlcNAc...) asparagine glycosylation is found at Asn-24, Asn-29, Asn-93, Asn-112, and Asn-185. 2 6-Cys domains span residues 24–157 and 160–299; these read NVTN…FKKM and KIKG…TSKN. Intrachain disulfides connect Cys-64/Cys-138, Cys-81/Cys-136, Cys-164/Cys-188, Cys-202/Cys-281, and Cys-222/Cys-279. Asn-295, Asn-306, Asn-383, Asn-396, Asn-400, and Asn-416 each carry an N-linked (GlcNAc...) asparagine glycan. The disordered stretch occupies residues 359–385; it reads KMDPSDEDESNENAHNGNRANKDANYS. A lipid anchor (GPI-anchor amidated serine) is attached at Ser-449. Positions 450–472 are cleaved as a propeptide — removed in mature form; that stretch reads SSYYEVFNYFSIAFILIIHMLLW.

It localises to the cell surface. It is found in the cell membrane. Its function is as follows. Involved in sporozoite infection of hepatocytes and replication therein. This Plasmodium berghei (strain Anka) protein is Sporozoite surface protein P36p (P52).